The following is a 197-amino-acid chain: Imidazoleglycerol-phosphate dehydratase (197 aa).

It belongs to the imidazoleglycerol-phosphate dehydratase family.

The protein resides in the cytoplasm. It carries out the reaction D-erythro-1-(imidazol-4-yl)glycerol 3-phosphate = 3-(imidazol-4-yl)-2-oxopropyl phosphate + H2O. It participates in amino-acid biosynthesis; L-histidine biosynthesis; L-histidine from 5-phospho-alpha-D-ribose 1-diphosphate: step 6/9. In Syntrophus aciditrophicus (strain SB), this protein is Imidazoleglycerol-phosphate dehydratase.